A 126-amino-acid chain; its full sequence is Holo-[acyl-carrier-protein] synthase (126 aa).

Mg(2+)-binding residues include D9 and E58.

This sequence belongs to the P-Pant transferase superfamily. AcpS family. Requires Mg(2+) as cofactor.

The protein resides in the cytoplasm. The enzyme catalyses apo-[ACP] + CoA = holo-[ACP] + adenosine 3',5'-bisphosphate + H(+). Functionally, transfers the 4'-phosphopantetheine moiety from coenzyme A to a Ser of acyl-carrier-protein. This is Holo-[acyl-carrier-protein] synthase from Yersinia enterocolitica serotype O:8 / biotype 1B (strain NCTC 13174 / 8081).